Consider the following 20-residue polypeptide: Major extrapallial fluid protein (20 aa).

The segment at 1 to 20 is disordered; sequence NPVDDHHDDHHDAPIVEHHD.

As to quaternary structure, homodimer. Post-translationally, glycosylated.

In terms of biological role, appears to be a building block of the soluble organic matrix of the shell. The protein binds calcium. This chain is Major extrapallial fluid protein, found in Mytilus edulis (Blue mussel).